A 394-amino-acid chain; its full sequence is NAD(P)H-quinone oxidoreductase subunit H (394 aa).

This sequence belongs to the complex I 49 kDa subunit family. As to quaternary structure, NDH-1 can be composed of about 15 different subunits; different subcomplexes with different compositions have been identified which probably have different functions.

The protein localises to the cellular thylakoid membrane. It catalyses the reaction a plastoquinone + NADH + (n+1) H(+)(in) = a plastoquinol + NAD(+) + n H(+)(out). The catalysed reaction is a plastoquinone + NADPH + (n+1) H(+)(in) = a plastoquinol + NADP(+) + n H(+)(out). In terms of biological role, NDH-1 shuttles electrons from an unknown electron donor, via FMN and iron-sulfur (Fe-S) centers, to quinones in the respiratory and/or the photosynthetic chain. The immediate electron acceptor for the enzyme in this species is believed to be plastoquinone. Couples the redox reaction to proton translocation, and thus conserves the redox energy in a proton gradient. Cyanobacterial NDH-1 also plays a role in inorganic carbon-concentration. This chain is NAD(P)H-quinone oxidoreductase subunit H, found in Prochlorococcus marinus (strain MIT 9313).